Consider the following 131-residue polypeptide: Large ribosomal subunit protein bL12 (131 aa).

The segment covering Glu99–Gly125 has biased composition (basic and acidic residues). A disordered region spans residues Glu99–Lys131.

The protein belongs to the bacterial ribosomal protein bL12 family. In terms of assembly, homodimer. Part of the ribosomal stalk of the 50S ribosomal subunit. Forms a multimeric L10(L12)X complex, where L10 forms an elongated spine to which 2 to 4 L12 dimers bind in a sequential fashion. Binds GTP-bound translation factors.

Its function is as follows. Forms part of the ribosomal stalk which helps the ribosome interact with GTP-bound translation factors. Is thus essential for accurate translation. This chain is Large ribosomal subunit protein bL12, found in Gloeothece citriformis (strain PCC 7424) (Cyanothece sp. (strain PCC 7424)).